The primary structure comprises 189 residues: Ion-translocating oxidoreductase complex subunit B (189 aa).

Residues 1–26 form a hydrophobic region; it reads MSGIFIAIILLTILALLFGILLGFAA. The 4Fe-4S domain occupies 32 to 90; it reads EGDPLVDQLEALLPQTQCGQCGYPGCRPYAEAIANGEKINLCPPGGSATMEKLAEMAGV. The [4Fe-4S] cluster site is built by cysteine 49, cysteine 52, cysteine 57, cysteine 73, cysteine 114, cysteine 117, cysteine 120, cysteine 124, cysteine 144, cysteine 147, cysteine 150, and cysteine 154. 4Fe-4S ferredoxin-type domains follow at residues 105 to 134 and 135 to 164; these read KVAYIREEECIGCTKCIQACPVDAILGSGK and LMHTVITDYCTGCDLCVAPCPVDCIDMLPV.

Belongs to the 4Fe4S bacterial-type ferredoxin family. RnfB subfamily. The complex is composed of six subunits: RnfA, RnfB, RnfC, RnfD, RnfE and RnfG. The cofactor is [4Fe-4S] cluster.

The protein resides in the cell inner membrane. Its function is as follows. Part of a membrane-bound complex that couples electron transfer with translocation of ions across the membrane. The polypeptide is Ion-translocating oxidoreductase complex subunit B (Shewanella sediminis (strain HAW-EB3)).